Consider the following 283-residue polypeptide: NADPH-dependent 7-cyano-7-deazaguanine reductase (283 aa).

90-92 (IES) contacts substrate. 92–93 (SK) lines the NADPH pocket. Cysteine 191 (thioimide intermediate) is an active-site residue. Aspartate 198 serves as the catalytic Proton donor. 230–231 (HE) is a substrate binding site. 259–260 (RG) is an NADPH binding site.

This sequence belongs to the GTP cyclohydrolase I family. QueF type 2 subfamily. Homodimer.

It localises to the cytoplasm. The catalysed reaction is 7-aminomethyl-7-carbaguanine + 2 NADP(+) = 7-cyano-7-deazaguanine + 2 NADPH + 3 H(+). It functions in the pathway tRNA modification; tRNA-queuosine biosynthesis. Functionally, catalyzes the NADPH-dependent reduction of 7-cyano-7-deazaguanine (preQ0) to 7-aminomethyl-7-deazaguanine (preQ1). This chain is NADPH-dependent 7-cyano-7-deazaguanine reductase, found in Tolumonas auensis (strain DSM 9187 / NBRC 110442 / TA 4).